The chain runs to 269 residues: Phosphonates import ATP-binding protein PhnC (269 aa).

The ABC transporter domain maps to 8–251 (IHLYGASLRH…LLDALYANEQ (244 aa)). Residue 40–47 (GPSGAGKS) participates in ATP binding.

It belongs to the ABC transporter superfamily. Phosphonates importer (TC 3.A.1.9.1) family. As to quaternary structure, the complex is composed of two ATP-binding proteins (PhnC), two transmembrane proteins (PhnE) and a solute-binding protein (PhnD).

It is found in the cell inner membrane. It catalyses the reaction phosphonate(out) + ATP + H2O = phosphonate(in) + ADP + phosphate + H(+). Part of the ABC transporter complex PhnCDE involved in phosphonates import. Responsible for energy coupling to the transport system. This Pseudomonas putida (strain ATCC 47054 / DSM 6125 / CFBP 8728 / NCIMB 11950 / KT2440) protein is Phosphonates import ATP-binding protein PhnC.